The following is a 288-amino-acid chain: MAPQFLKALTVATALGATLATALPVQPKPTVWHTTTQVVVKTITKTATVHGTPGPDYTVPPAYTTPAAPTVPTDAPQQPSYTPVPSAPTPSSSSSYSAPAEPSSSSVPAPPPPPPTTTSTPAPEPTTSTTPPPPPPAMTTPPPPPPPPATKPPVVSIPPIGGGGSTYTGPCAAGSPCTGEITFYDGGLGACGTNIDTNGEDAIALPIELMGPLSNNNPYCGKQVQISYKGKTATATVKDKCAGCTGNNIDMTRFLFYKLIRFPVAFTNSSNSGVEADGRIHGVEWHFI.

The first 20 residues, 1-20 (MAPQFLKALTVATALGATLA), serve as a signal peptide directing secretion. Low complexity-rich tracts occupy residues 48-107 (TVHG…SSSV) and 117-129 (TTST…TTST). A disordered region spans residues 48–161 (TVHGTPGPDY…PPVVSIPPIG (114 aa)). Positions 130–151 (TPPPPPPAMTTPPPPPPPPATK) are enriched in pro residues. Residue Asn268 is glycosylated (N-linked (GlcNAc...) asparagine).

It localises to the secreted. This chain is Allergen Asp f 7 homolog, found in Arthroderma benhamiae (strain ATCC MYA-4681 / CBS 112371) (Trichophyton mentagrophytes).